Here is a 380-residue protein sequence, read N- to C-terminus: Cystathionine gamma-synthase (380 aa).

N6-(pyridoxal phosphate)lysine is present on Lys-195.

The protein belongs to the trans-sulfuration enzymes family. Homotetramer. It depends on pyridoxal 5'-phosphate as a cofactor.

Its subcellular location is the cytoplasm. It catalyses the reaction O-succinyl-L-homoserine + L-cysteine = L,L-cystathionine + succinate + H(+). Its pathway is amino-acid biosynthesis; L-methionine biosynthesis via de novo pathway; L-cystathionine from O-succinyl-L-homoserine: step 1/1. Its activity is regulated as follows. Four natural products, alpha-lapachone, 9-hydroxy-alpha-lapachone, Paulownin, and Yangambin, show strong inhibitory activities against CGS. All these four inhibitors prevent the binding of OSHS to CGS in a non-competitive fashion. These compounds are specific inhibitors against CGS from H.pylori relative to E.coli since they exhibit very low inhibition activities against CGS from E.coli. Functionally, catalyzes the formation of L-cystathionine from O-succinyl-L-homoserine (OSHS) and L-cysteine, via a gamma-replacement reaction. In the absence of thiol, catalyzes gamma-elimination to form 2-oxobutanoate, succinate and ammonia. The protein is Cystathionine gamma-synthase (metB) of Helicobacter pylori (Campylobacter pylori).